A 365-amino-acid polypeptide reads, in one-letter code: Peptide chain release factor 2 (365 aa).

An N5-methylglutamine modification is found at Gln252.

Belongs to the prokaryotic/mitochondrial release factor family. Post-translationally, methylated by PrmC. Methylation increases the termination efficiency of RF2.

Its subcellular location is the cytoplasm. Functionally, peptide chain release factor 2 directs the termination of translation in response to the peptide chain termination codons UGA and UAA. The polypeptide is Peptide chain release factor 2 (Shewanella baltica (strain OS223)).